The sequence spans 372 residues: Chaperone protein DnaJ (372 aa).

Positions 5-69 (DYYEVLGVSK…DKRKQYDQFG (65 aa)) constitute a J domain. Residues 139–221 (GVDKIIELDL…CKGKGKYLER (83 aa)) form a CR-type zinc finger. The Zn(2+) site is built by C152, C155, C169, C172, C195, C198, C209, and C212. CXXCXGXG motif repeat units lie at residues 152–159 (CSVCFGSG), 169–176 (CNNCHGTG), 195–202 (CNVCNGAG), and 209–216 (CKNCKGKG).

This sequence belongs to the DnaJ family. In terms of assembly, homodimer. It depends on Zn(2+) as a cofactor.

Its subcellular location is the cytoplasm. Participates actively in the response to hyperosmotic and heat shock by preventing the aggregation of stress-denatured proteins and by disaggregating proteins, also in an autonomous, DnaK-independent fashion. Unfolded proteins bind initially to DnaJ; upon interaction with the DnaJ-bound protein, DnaK hydrolyzes its bound ATP, resulting in the formation of a stable complex. GrpE releases ADP from DnaK; ATP binding to DnaK triggers the release of the substrate protein, thus completing the reaction cycle. Several rounds of ATP-dependent interactions between DnaJ, DnaK and GrpE are required for fully efficient folding. Also involved, together with DnaK and GrpE, in the DNA replication of plasmids through activation of initiation proteins. This Mycoplasma mycoides subsp. mycoides SC (strain CCUG 32753 / NCTC 10114 / PG1) protein is Chaperone protein DnaJ.